A 3142-amino-acid polypeptide reads, in one-letter code: Huntingtin (3142 aa).

The interval 3–13 (TLEKLMKAFES) is sufficient for interaction with TPR. N6-acetyllysine is present on K9. The interval 14-85 (LKSFQQQQQQ…PGPAVAEEPL (72 aa)) is disordered. The span at 18–37 (QQQQQQQQQQQQQQQQQQQQ) shows a compositional bias: low complexity. Pro residues predominate over residues 38–78 (QPPPPPPPPPPPQLPQPPPQAQPLLPQPQPPPPPPPPPPGP). An N6-acetyllysine mark is found at K176 and K234. 3 HEAT repeats span residues 204 to 241 (PYLVNLLPCLTRTSKRPEESVQETLAAAVPKIMASFGN), 246 to 283 (NEIKVLLKAFIANLKSSSPTIRRTAAGSAVSICQHSRR), and 316 to 360 (LTLR…VYEL). K343 bears the N6-acetyllysine mark. A phosphoserine mark is found at S411, S417, S419, and S432. Residue K442 is modified to N6-acetyllysine. The segment at 447-469 (EEEALEDDSESRSDVSSSALTAS) is disordered. An interaction with ZDHHC17 region spans residues 491–502 (GHDIITEQPRSQ). Residues 517 to 583 (LTSSATDGDE…TPSDSSEIVL (67 aa)) form a disordered region. Over residues 531–545 (SHSSSQVSAVPSDPA) the composition is skewed to low complexity. The segment covering 550–579 (DGTQASSPISDSSQTTTEGPDSAVTPSDSS) has biased composition (polar residues). G551 carries N-myristoyl glycine lipidation. 2 positions are modified to phosphoserine: S640 and S643. HEAT repeat units lie at residues 802–839 (FSLADCIPLLRKTLKDESSVTCKLACTAVRNCVMSLCS) and 902–940 (KLQERVLNNVVIHLLGDEDPRVRHVAAASLIRLVPKLFY). The disordered stretch occupies residues 1176-1225 (PSLSPIRRKGKEKEPGEQASVPLSPKKGSEASAASRQSDTSGPVTTSKSS). Phosphoserine; by CDK5 is present on residues S1179 and S1199. The span at 1207 to 1225 (SAASRQSDTSGPVTTSKSS) shows a compositional bias: polar residues. Residues S1870 and S1874 each carry the phosphoserine modification. The tract at residues 2330–2351 (ERRTNTPKAISEEEEEVDPNTQ) is disordered. The Nuclear export signal motif lies at 2395 to 2404 (IIISLARLPL). The tract at residues 2633–2662 (EEEWDEEEEEEADAPAPSSPPTSPVNSRKH) is disordered. Residues 2634-2645 (EEWDEEEEEEAD) show a composition bias toward acidic residues.

The protein belongs to the huntingtin family. Interacts with PFN1. Interacts through its N-terminus with PRPF40A. Interacts with PQBP1. Interacts with SETD2. Interacts with SH3GLB1. Interacts with SYVN. Interacts with TPR; the interaction is inhibited by forms of Huntingtin with expanded polyglutamine stretch. Interacts with ZDHHC13 (via ANK repeats). Interacts with ZDHHC17 (via ANK repeats). Interacts with F8A1/F8A2/F8A3. Found in a complex with F8A1/F8A2/F8A3, HTT and RAB5A; mediates the recruitment of HTT by RAB5A. Cleaved by caspases downstream of the polyglutamine stretch. The resulting N-terminal fragments are cytotoxic and provokes apoptosis. Post-translationally, forms with expanded polyglutamine expansion are specifically ubiquitinated by SYVN1, which promotes their proteasomal degradation. In terms of processing, phosphorylation at Ser-1179 and Ser-1199 by CDK5 in response to DNA damage in nuclei of neurons protects neurons against polyglutamine expansion as well as DNA damage mediated toxicity. Myristoylated at Gly-551, following proteolytic cleavage at Asp-550. Expressed in the brain cortex (at protein level). Widely expressed with the highest level of expression in the brain (nerve fibers, varicosities, and nerve endings). In the brain, the regions where it can be mainly found are the cerebellar cortex, the neocortex, the striatum, and the hippocampal formation.

The protein resides in the cytoplasm. The protein localises to the nucleus. It is found in the early endosome. Its subcellular location is the cytoplasmic vesicle. It localises to the autophagosome. May play a role in microtubule-mediated transport or vesicle function. In terms of biological role, promotes the formation of autophagic vesicles. This is Huntingtin (HTT) from Homo sapiens (Human).